Consider the following 135-residue polypeptide: ATP synthase epsilon chain (135 aa).

This sequence belongs to the ATPase epsilon chain family. In terms of assembly, F-type ATPases have 2 components, CF(1) - the catalytic core - and CF(0) - the membrane proton channel. CF(1) has five subunits: alpha(3), beta(3), gamma(1), delta(1), epsilon(1). CF(0) has three main subunits: a, b and c.

It is found in the cellular thylakoid membrane. Produces ATP from ADP in the presence of a proton gradient across the membrane. This is ATP synthase epsilon chain from Prochlorococcus marinus (strain MIT 9211).